A 490-amino-acid polypeptide reads, in one-letter code: Cytochrome P450 monooxygenase aclL (490 aa).

Residues 1–21 (MLFSLGPLTIVYGLVIFVVAK) form a helical membrane-spanning segment. N176 is a glycosylation site (N-linked (GlcNAc...) asparagine). C434 contributes to the heme binding site.

This sequence belongs to the cytochrome P450 family. The cofactor is heme.

The protein localises to the membrane. It functions in the pathway mycotoxin biosynthesis. In terms of biological role, cytochrome P450 monooxygenase; part of the gene cluster that mediates the biosynthesis of aspirochlorine (or antibiotic A30641), an unusual halogenated spiro compound with distinctive antifungal properties due to selective inhibition of protein biosynthesis, and which is also active against bacteria, viruses, and murine tumor cells. The non-ribosomal peptide synthetase (NRPS) aclP is responsible the formation of the diketopiperazine (DKP) core from the condensation of 2 phenylalanine residues. One Phe residue is tailored into chlorotyrosine by hydroxylation and chlorination, whereas the second Phe undergoes an unprecedented C-C bond cleavage to be converted into glycine. After formation of the DKP, sulfur is incorporated into the DKP by conjugation with glutathione by aclG, followed by its stepwise degradation to the thiol by aclI, aclJ and aclK, and the dithiol oxidation by aclT. In addition, oxygenases (aclB, aclC, aclL and aclO) and O-methyltransferases (aclM and aclU) act as tailoring enzymes to produce the intermediate dechloroaspirochlorine. Ultimately, chlorination of dechloroaspirochlorine by the halogenase aclH is the last step in the aspirochlorine pathway. The chain is Cytochrome P450 monooxygenase aclL from Aspergillus oryzae (strain ATCC 42149 / RIB 40) (Yellow koji mold).